The following is an 85-amino-acid chain: Large ribosomal subunit protein bL27 (85 aa).

This sequence belongs to the bacterial ribosomal protein bL27 family.

This Pseudomonas fluorescens (strain SBW25) protein is Large ribosomal subunit protein bL27.